The chain runs to 131 residues: D-ribose pyranase (131 aa).

His20 functions as the Proton donor in the catalytic mechanism. Substrate is bound by residues Asp28, His98, and 120–122 (YCN).

This sequence belongs to the RbsD / FucU family. RbsD subfamily. Homodecamer.

It localises to the cytoplasm. The enzyme catalyses beta-D-ribopyranose = beta-D-ribofuranose. Its pathway is carbohydrate metabolism; D-ribose degradation; D-ribose 5-phosphate from beta-D-ribopyranose: step 1/2. In terms of biological role, catalyzes the interconversion of beta-pyran and beta-furan forms of D-ribose. This is D-ribose pyranase from Coprothermobacter proteolyticus (strain ATCC 35245 / DSM 5265 / OCM 4 / BT).